An 87-amino-acid chain; its full sequence is U3-theraphotoxin-Hhn1g (87 aa).

Positions 1–24 (MVNMKASMFLTFAGLVLLFVVCFA) are cleaved as a signal peptide. The propeptide occupies 25–52 (SESEEKEFPKEMLSSIFAVDNDFKQEER). Disulfide bonds link cysteine 54-cysteine 67, cysteine 61-cysteine 72, and cysteine 66-cysteine 79.

It belongs to the neurotoxin 10 (Hwtx-1) family. 51 (Hntx-8) subfamily. Hntx-8 sub-subfamily. In terms of tissue distribution, expressed by the venom gland.

The protein localises to the secreted. Ion channel inhibitor. The sequence is that of U3-theraphotoxin-Hhn1g from Cyriopagopus hainanus (Chinese bird spider).